Consider the following 157-residue polypeptide: Large ribosomal subunit protein uL15 (157 aa).

A compositionally biased stretch (basic and acidic residues) spans 1–13; that stretch reads MKLNDLRDKDGAT. The tract at residues 1–39 is disordered; the sequence is MKLNDLRDKDGATHSKKRLGRGIGSGSGKTAGRGVKGQK. Over residues 21 to 35 the composition is skewed to gly residues; the sequence is RGIGSGSGKTAGRGV.

This sequence belongs to the universal ribosomal protein uL15 family. Part of the 50S ribosomal subunit.

Its function is as follows. Binds to the 23S rRNA. The protein is Large ribosomal subunit protein uL15 of Mesorhizobium japonicum (strain LMG 29417 / CECT 9101 / MAFF 303099) (Mesorhizobium loti (strain MAFF 303099)).